Consider the following 744-residue polypeptide: Collagen alpha-1(VIII) chain (744 aa).

Residues 1-27 form the signal peptide; the sequence is MAVPPGPPQLLQVLLTISLGSIRLIQA. Positions 29–117 are nonhelical region (NC2); the sequence is AYYGIKPLPP…GKEIPLASLR (89 aa). Positions 101-110 are enriched in basic and acidic residues; that stretch reads KEAVPKKGKE. Disordered regions lie at residues 101 to 435 and 478 to 584; these read KEAV…GLQG and LLGP…QGEY. The segment at 118–571 is triple-helical region; sequence GEQGPRGEPG…PGPPGPPGPP (454 aa). Residues 128–137 are compositionally biased toward pro residues; that stretch reads PRGPPGPPGL. Residues 168–190 are compositionally biased toward low complexity; that stretch reads KPGAMGMPGAKGEIGPKGEIGPM. Positions 203–217 are enriched in gly residues; sequence GLPGIGKPGGPGLPG. Positions 288 to 298 are enriched in pro residues; sequence KPGPPGEPGPQ. Positions 328-337 are enriched in gly residues; sequence GFPGGKGEQG. A compositionally biased stretch (pro residues) spans 389 to 403; it reads PGEPGLPGIPGPMGP. Gly residues predominate over residues 411-420; sequence GPKGEGGIVG. Low complexity-rich tracts occupy residues 478 to 506 and 540 to 556; these read LLGPKGEPGIPGDQGLQGPPGIPGITGPS and LHGPPGKPGALGPQGQP. Positions 558–579 are enriched in pro residues; the sequence is LPGPPGPPGPPGPPAVMPPTPA. Positions 572-744 are nonhelical region (NC1); the sequence is AVMPPTPAPQ…SFSGYLLYPM (173 aa). The C1q domain occupies 611–744; that stretch reads PAYEMPAFTA…SFSGYLLYPM (134 aa).

In terms of assembly, homotrimers, or heterotrimers in association with alpha 2(VIII) type collagens. Four homotrimers can form a tetrahedron stabilized by central interacting C-terminal NC1 trimers. Post-translationally, prolines at the third position of the tripeptide repeating unit (G-X-Y) are hydroxylated in some or all of the chains. In terms of processing, proteolytically cleaved by neutrophil elastase, in vitro. Proteolytic processing produces the C-terminal NC1 domain fragment, vastatin.

The protein resides in the secreted. It is found in the extracellular space. The protein localises to the extracellular matrix. Its subcellular location is the basement membrane. Functionally, macromolecular component of the subendothelium. Major component of the Descemet's membrane (basement membrane) of corneal endothelial cells. Also a component of the endothelia of blood vessels. Necessary for migration and proliferation of vascular smooth muscle cells and thus, has a potential role in the maintenance of vessel wall integrity and structure, in particular in atherogenesis. In terms of biological role, vastatin, the C-terminal fragment comprising the NC1 domain, inhibits aortic endothelial cell proliferation and causes cell apoptosis. This Oryctolagus cuniculus (Rabbit) protein is Collagen alpha-1(VIII) chain (COL8A1).